Here is a 403-residue protein sequence, read N- to C-terminus: Ribosomal RNA large subunit methyltransferase I (403 aa).

Residues 9-88 (YPRLVLSKGR…ESIDIAFFTR (80 aa)) enclose the PUA domain.

The protein belongs to the methyltransferase superfamily. RlmI family.

The protein resides in the cytoplasm. The enzyme catalyses cytidine(1962) in 23S rRNA + S-adenosyl-L-methionine = 5-methylcytidine(1962) in 23S rRNA + S-adenosyl-L-homocysteine + H(+). Functionally, specifically methylates the cytosine at position 1962 (m5C1962) of 23S rRNA. This Salmonella typhi protein is Ribosomal RNA large subunit methyltransferase I.